The following is a 76-amino-acid chain: Large ribosomal subunit protein uL29 (76 aa).

The protein belongs to the universal ribosomal protein uL29 family.

This chain is Large ribosomal subunit protein uL29, found in Corynebacterium efficiens (strain DSM 44549 / YS-314 / AJ 12310 / JCM 11189 / NBRC 100395).